Here is a 147-residue protein sequence, read N- to C-terminus: Transcriptional regulator MraZ (147 aa).

2 SpoVT-AbrB domains span residues 6 to 48 and 77 to 120; these read NFER…NSEE and TVEV…SKAK.

It belongs to the MraZ family. As to quaternary structure, forms oligomers.

The protein resides in the cytoplasm. It is found in the nucleoid. In Mycoplasmopsis pulmonis (strain UAB CTIP) (Mycoplasma pulmonis), this protein is Transcriptional regulator MraZ.